Consider the following 195-residue polypeptide: Morphogenetic protein (195 aa).

Functionally, assembly factor active in membrane morphogenesis. This is Morphogenetic protein (P12) from Pseudomonas phage phi6 (Bacteriophage phi-6).